A 208-amino-acid polypeptide reads, in one-letter code: dITP/XTP pyrophosphatase (208 aa).

17-22 provides a ligand contact to substrate; it reads SNNPGK. Mg(2+)-binding residues include Asp49 and Asp78. Asp78 acts as the Proton acceptor in catalysis. Residues Ser79, 164–167, Lys187, and 192–193 each bind substrate; these read FGYD and HR.

This sequence belongs to the HAM1 NTPase family. In terms of assembly, homodimer. The cofactor is Mg(2+).

The enzyme catalyses XTP + H2O = XMP + diphosphate + H(+). The catalysed reaction is dITP + H2O = dIMP + diphosphate + H(+). It catalyses the reaction ITP + H2O = IMP + diphosphate + H(+). In terms of biological role, pyrophosphatase that catalyzes the hydrolysis of nucleoside triphosphates to their monophosphate derivatives, with a high preference for the non-canonical purine nucleotides XTP (xanthosine triphosphate), dITP (deoxyinosine triphosphate) and ITP. Seems to function as a house-cleaning enzyme that removes non-canonical purine nucleotides from the nucleotide pool, thus preventing their incorporation into DNA/RNA and avoiding chromosomal lesions. The chain is dITP/XTP pyrophosphatase from Burkholderia pseudomallei (strain K96243).